A 445-amino-acid polypeptide reads, in one-letter code: NADH-quinone oxidoreductase subunit F (445 aa).

Glycine 61–glycine 70 serves as a coordination point for NAD(+). An FMN-binding site is contributed by glycine 174–threonine 221. [4Fe-4S] cluster is bound by residues cysteine 351, cysteine 354, cysteine 357, and cysteine 398.

The protein belongs to the complex I 51 kDa subunit family. In terms of assembly, composed of 13 different subunits. Subunits NuoCD, E, F, and G constitute the peripheral sector of the complex. FMN serves as cofactor. Requires [4Fe-4S] cluster as cofactor.

The enzyme catalyses a quinone + NADH + 5 H(+)(in) = a quinol + NAD(+) + 4 H(+)(out). Its function is as follows. NDH-1 shuttles electrons from NADH, via FMN and iron-sulfur (Fe-S) centers, to quinones in the respiratory chain. The immediate electron acceptor for the enzyme in this species is believed to be ubiquinone. Couples the redox reaction to proton translocation (for every two electrons transferred, four hydrogen ions are translocated across the cytoplasmic membrane), and thus conserves the redox energy in a proton gradient. The polypeptide is NADH-quinone oxidoreductase subunit F (nuoF) (Escherichia coli (strain K12)).